The chain runs to 729 residues: MLSITPEIIKEIVQGEYHDVFAVLGPHAQKNGYVIRAFFPAAKTLQVKSKLDGSVLAEAVMRNEEGFFEANCNCSEKPSYYFTVGYGDKEFDVEDMYRFGSTIPEGDLYLFGEGTYEQAYRLFGAHPTEVDGVPGCRFTVWAPNAKTVAVVGDFNFWQGRAHVMRKHIPSGIWELFIPYLGEGALYKYEIRNHSGDCLPHKADPYGFAAQKPPEQASVVSVLDRYEWNDAEWFAKANNWTQRDRPISIYEVHLGSWKRVVEEDNRYLSYKELAADLIPYVKSMGFTHIQLMPISEFPFDGSWGYQPVGLYAPTSRFGSPEDFKYFVDCCHQNDLAVLIDWVPGHFPTDSHGLGLFDGTPLYEHADSRQGFHPDWNTYIYNYGRHEVKSFLMANALFWLEQYHIDGLRVDAVASMLYLDYSRKDGEWLPNSYGGRENLEAIDFLRLVNERVYKRFPHAMMVAEESTAWPGVSSPTSCGGLGFGYKWNMGWMNDSLQYISKEPIHRQYHHHDMTFSLHYAFSENFVLPLSHDEVVHGKRSLLGRMPGDAWQQFANLRAYYAFMWTHPGKKLLFMGGEFAQGMEWNHDTSLSWHQLEIDYHSGIQTLVKSLNRLYTDVPALYKEDCMSSGFEWVEADDRHNSIFAFLRKAKDEKPVLVVANFTPVAREGYRVGVNQPGYYRELLNTDSELFGGSNLGNEGGVHSEEIAWHQRPQSVSINIPALAAVVFQLDS.

Asp-409 serves as the catalytic Nucleophile. Catalysis depends on Glu-462, which acts as the Proton donor.

The protein belongs to the glycosyl hydrolase 13 family. GlgB subfamily. Monomer.

The enzyme catalyses Transfers a segment of a (1-&gt;4)-alpha-D-glucan chain to a primary hydroxy group in a similar glucan chain.. It functions in the pathway glycan biosynthesis; glycogen biosynthesis. Its function is as follows. Catalyzes the formation of the alpha-1,6-glucosidic linkages in glycogen by scission of a 1,4-alpha-linked oligosaccharide from growing alpha-1,4-glucan chains and the subsequent attachment of the oligosaccharide to the alpha-1,6 position. This chain is 1,4-alpha-glucan branching enzyme GlgB, found in Saccharophagus degradans (strain 2-40 / ATCC 43961 / DSM 17024).